Reading from the N-terminus, the 83-residue chain is Urotensin-2 (83 aa).

Positions 49 to 71 (EVLLEKQSLLNPFSRVFGIRKQF) are excised as a propeptide. The cysteines at positions 77 and 82 are disulfide-linked.

This sequence belongs to the urotensin-2 family.

The protein resides in the secreted. In terms of biological role, urotensin is found in the teleost caudal neurosecretory system. It has a suggested role in osmoregulation and as a corticotropin-releasing factor. The non-hormonal portion of this precursor may be a urotensin binding protein, urophysin. The sequence is that of Urotensin-2 from Platichthys flesus (European flounder).